A 347-amino-acid polypeptide reads, in one-letter code: Microneme protein 21 (347 aa).

It localises to the cytoplasmic vesicle. The protein localises to the secretory vesicle. The protein resides in the microneme. Its subcellular location is the secreted. The protein is Microneme protein 21 of Toxoplasma gondii.